A 251-amino-acid chain; its full sequence is MSGHSKWATTKHKKAVIDARRGKNFAKLIKNIEVAARTGGGDPGGNPTLYDAIQKAKKNSVPNDNIERARKRGAGEEAGGADWQNITYEGYGPNGVAILVECLTDNKNRAAGEVRVAMTRNGGNMADPGSVAYLFTRKGVVTLDKNGLSEDDVLAAVLDAGAEDVNDLGDSFEIISEPTDLVAVRTALQDAGIEYDSAEASFQPSVSVPVDLDGARKVLKLVDALEDSDDVQDVYTNVDIPDDVAAQLDAD.

Belongs to the TACO1 family.

It is found in the cytoplasm. This chain is Probable transcriptional regulatory protein Mflv_3828, found in Mycolicibacterium gilvum (strain PYR-GCK) (Mycobacterium gilvum (strain PYR-GCK)).